The chain runs to 530 residues: MAKASSIRQFVTSRFIVPGTGLLKGFKLVEDSNSITHLFQVHARLITSGNFWDSSWAIRLLKSSSRFGDSSYTVSIYRSIGKLYCANPVFKAYLVSSSPKQALGFYFDILRFGFVPDSYTFVSLISCIEKTCCVDSGKMCHGQAIKHGCDQVLPVQNSLMHMYTCCGALDLAKKLFVEIPKRDIVSWNSIIAGMVRNGDVLAAHKLFDEMPDKNIISWNIMISAYLGANNPGVSISLFREMVRAGFQGNESTLVLLLNACGRSARLKEGRSVHASLIRTFLNSSVVIDTALIDMYGKCKEVGLARRIFDSLSIRNKVTWNVMILAHCLHGRPEGGLELFEAMINGMLRPDEVTFVGVLCGCARAGLVSQGQSYYSLMVDEFQIKPNFGHQWCMANLYSSAGFPEEAEEALKNLPDEDVTPESTKWANLLSSSRFTGNPTLGESIAKSLIETDPLNYKYYHLLMNIYSVTGRWEDVNRVREMVKERKIGRIPGCGLVDLKEIVHGLRLGCKEAEKVFTETSLEKCYSDSPS.

PPR repeat units lie at residues 82–116, 117–151, 152–182, 183–217, 218–248, 249–283, 284–314, 315–349, 350–380, and 386–420; these read KLYCANPVFKAYLVSSSPKQALGFYFDILRFGFVP, DSYTFVSLISCIEKTCCVDSGKMCHGQAIKHGCDQ, VLPVQNSLMHMYTCCGALDLAKKLFVEIPKR, DIVSWNSIIAGMVRNGDVLAAHKLFDEMPDKNIIS, WNIMISAYLGANNPGVSISLFREMVRAGFQG, NESTLVLLLNACGRSARLKEGRSVHASLIRTFLNS, SVVIDTALIDMYGKCKEVGLARRIFDSLSIR, NKVTWNVMILAHCLHGRPEGGLELFEAMINGMLRP, DEVTFVGVLCGCARAGLVSQGQSYYSLMVDE, and NFGHQWCMANLYSSAGFPEEAEEALKNLPDEDVTP. Residues 424 to 499 form a type E motif region; it reads KWANLLSSSR…IPGCGLVDLK (76 aa).

Belongs to the PPR family. PCMP-E subfamily.

The chain is Pentatricopeptide repeat-containing protein At3g51320 from Arabidopsis thaliana (Mouse-ear cress).